A 294-amino-acid polypeptide reads, in one-letter code: Survival motor neuron protein (294 aa).

The segment covering 1-12 has biased composition (gly residues); the sequence is MAMSSGGSGGGV. The tract at residues 1–32 is disordered; the sequence is MAMSSGGSGGGVPEQEDSVLFRRGTGQSDDSD. Position 2 is an N-acetylalanine (alanine 2). A phosphoserine; by PKA mark is found at serine 4, serine 5, and serine 8. At threonine 25 the chain carries Phosphothreonine. An interacts with GEMIN2 region spans residues 26–51; it reads GQSDDSDIWDDTALIKAYDKAVASFK. 2 positions are modified to phosphoserine: serine 28 and serine 31. Lysine 51 is covalently cross-linked (Glycyl lysine isopeptide (Lys-Gly) (interchain with G-Cter in SUMO2)). The segment at 59-88 is disordered; it reads ICETSGKPKTTPKRKPAKKNKSQKKNTAAS. Over residues 68 to 82 the composition is skewed to basic residues; that stretch reads TTPKRKPAKKNKSQK. Threonine 69 is modified (phosphothreonine). Threonine 85 carries the post-translational modification Phosphothreonine; by PKA. A Tudor domain is found at 91-151; it reads QWKVGDKCSA…LSPICEVANN (61 aa). Residues 97–209 are required for interaction with RPP20/POP7; that stretch reads KCSAIWSEDG…MPGPRLGPGK (113 aa). Positions 156–166 are enriched in low complexity; that stretch reads AQENENESQVS. Positions 156–222 are disordered; it reads AQENENESQV…KFNGPPPPPP (67 aa). Phosphoserine; by PKA is present on serine 187. A compositionally biased stretch (pro residues) spans 194-204; the sequence is LPPPPPMPGPR. Low complexity predominate over residues 206–215; it reads GPGKPGLKFN. Lysine 209 participates in a covalent cross-link: Glycyl lysine isopeptide (Lys-Gly) (interchain with G-Cter in SUMO2). The interval 240-267 is P2 (binding site for SNRPB); that stretch reads PPIIPPPPPICPDSLDDADALGSMLISW. The interval 252 to 280 is involved in homooligomerization; it reads DSLDDADALGSMLISWYMSGYHTGYYMGF. The segment at 279-294 is required for interaction with SYNCRIP; the sequence is GFRQNQKEGRCSHSLN.

It belongs to the SMN family. In terms of assembly, homooligomer; may form higher order homooligomers in the dimer to octamer range. Part of the core SMN complex that contains SMN1, GEMIN2/SIP1, DDX20/GEMIN3, GEMIN4, GEMIN5, GEMIN6, GEMIN7, GEMIN8 and STRAP/UNRIP. Part of the SMN-Sm complex that contains SMN1, GEMIN2/SIP1, DDX20/GEMIN3, GEMIN4, GEMIN5, GEMIN6, GEMIN7, GEMIN8, STRAP/UNRIP and the Sm proteins SNRPB, SNRPD1, SNRPD2, SNRPD3, SNRPE, SNRPF and SNRPG. Component of an import snRNP complex composed of KPNB1, RNUT1, SMN1 and ZNF259. Interacts with DDX20, FBL, NOLA1, RNUT1, SYNCRIP and with several spliceosomal snRNP core Sm proteins, including SNRPB, SNRPD1, SNRPD2, SNRPD3, SNRPE and ILF3. Interacts with GEMIN2; the interaction is direct. Interacts with GEMIN3; the interaction is direct. Interacts with GEMIN8; the interaction is direct. Interacts with SNRPB; the interaction is direct. Interacts (via Tudor domain) with SNRPD1 (via C-terminus); the interaction is direct. Interacts with SNRPD2; the interaction is direct. Interacts (via Tudor domain) with SNRPD3 (via C-terminus); the interaction is direct. Interacts with SNRPE; the interaction is direct. Interacts with OSTF1, LSM10, LSM11 and RPP20/POP7. Interacts (via C-terminal region) with ZPR1 (via C-terminal region). Interacts (via Tudor domain) with COIL. Interacts with SETX; recruits SETX to POLR2A. Interacts with POLR2A (via the C-terminal domain (CTD)). Interacts with PRMT5. Interacts with XRN2. Interacts (via C-terminus) with FMR1 (via C-terminus); the interaction is direct and occurs in a RNA-independent manner. Interacts (via Tudor domain) with SF3B2 ('Arg-508'-methylated form). Interacts with WRAP53/TCAB1. Interacts (via Tudor domain) with ELAVL4 in an RNA-independent manner; the interaction is required for localization of ELAVL4 to RNA granules. Interacts with FRG1. Does not homooligomerize. Does not interact with SNRPB. Expressed in a wide variety of tissues. Expressed at high levels in brain, kidney and liver, moderate levels in skeletal and cardiac muscle, and low levels in fibroblasts and lymphocytes. Also seen at high levels in spinal cord. Present in osteoclasts and mononuclear cells (at protein level).

The protein localises to the nucleus. Its subcellular location is the gem. It localises to the cajal body. The protein resides in the cytoplasm. It is found in the cytoplasmic granule. The protein localises to the perikaryon. Its subcellular location is the cell projection. It localises to the neuron projection. The protein resides in the axon. It is found in the myofibril. The protein localises to the sarcomere. Its subcellular location is the z line. In terms of biological role, the SMN complex catalyzes the assembly of small nuclear ribonucleoproteins (snRNPs), the building blocks of the spliceosome, and thereby plays an important role in the splicing of cellular pre-mRNAs. Most spliceosomal snRNPs contain a common set of Sm proteins SNRPB, SNRPD1, SNRPD2, SNRPD3, SNRPE, SNRPF and SNRPG that assemble in a heptameric protein ring on the Sm site of the small nuclear RNA to form the core snRNP (Sm core). In the cytosol, the Sm proteins SNRPD1, SNRPD2, SNRPE, SNRPF and SNRPG are trapped in an inactive 6S pICln-Sm complex by the chaperone CLNS1A that controls the assembly of the core snRNP. To assemble core snRNPs, the SMN complex accepts the trapped 5Sm proteins from CLNS1A forming an intermediate. Within the SMN complex, SMN1 acts as a structural backbone and together with GEMIN2 it gathers the Sm complex subunits. Binding of snRNA inside 5Sm ultimately triggers eviction of the SMN complex, thereby allowing binding of SNRPD3 and SNRPB to complete assembly of the core snRNP. Ensures the correct splicing of U12 intron-containing genes that may be important for normal motor and proprioceptive neurons development. Also required for resolving RNA-DNA hybrids created by RNA polymerase II, that form R-loop in transcription terminal regions, an important step in proper transcription termination. May also play a role in the metabolism of small nucleolar ribonucleoprotein (snoRNPs). The protein is Survival motor neuron protein (SMN1) of Homo sapiens (Human).